The following is a 201-amino-acid chain: Recombination protein RecR (201 aa).

The C4-type zinc finger occupies cysteine 58–cysteine 73. In terms of domain architecture, Toprim spans threonine 81–proline 176.

The protein belongs to the RecR family.

Its function is as follows. May play a role in DNA repair. It seems to be involved in an RecBC-independent recombinational process of DNA repair. It may act with RecF and RecO. The chain is Recombination protein RecR from Halorhodospira halophila (strain DSM 244 / SL1) (Ectothiorhodospira halophila (strain DSM 244 / SL1)).